Reading from the N-terminus, the 256-residue chain is NAD-dependent protein deacetylase (256 aa).

Residues 1–254 (MDISYHEKIS…KDILDVIKSE (254 aa)) form the Deacetylase sirtuin-type domain. Positions 28, 32, 39, 40, 105, 107, 108, and 123 each coordinate NAD(+). F39 serves as a coordination point for nicotinamide. Positions 107 and 108 each coordinate nicotinamide. H123 acts as the Proton acceptor in catalysis. The Zn(2+) site is built by C131, C134, C156, and C159. Residues T197, S198, and N222 each contribute to the NAD(+) site.

It belongs to the sirtuin family. Class U subfamily. Zn(2+) is required as a cofactor.

Its subcellular location is the cytoplasm. It carries out the reaction N(6)-acetyl-L-lysyl-[protein] + NAD(+) + H2O = 2''-O-acetyl-ADP-D-ribose + nicotinamide + L-lysyl-[protein]. NAD-dependent protein deacetylase which modulates the activities of several enzymes which are inactive in their acetylated form. This is NAD-dependent protein deacetylase from Thermodesulfovibrio yellowstonii (strain ATCC 51303 / DSM 11347 / YP87).